A 397-amino-acid polypeptide reads, in one-letter code: Pyridinium-3,5-bisthiocarboxylic acid mononucleotide nickel insertion protein (397 aa).

This sequence belongs to the LarC family.

It carries out the reaction Ni(II)-pyridinium-3,5-bisthiocarboxylate mononucleotide = pyridinium-3,5-bisthiocarboxylate mononucleotide + Ni(2+). Its function is as follows. Involved in the biosynthesis of a nickel-pincer cofactor ((SCS)Ni(II) pincer complex). Binds Ni(2+), and functions in nickel delivery to pyridinium-3,5-bisthiocarboxylic acid mononucleotide (P2TMN), to form the mature cofactor. Is thus probably required for the activation of nickel-pincer cofactor-dependent enzymes. The chain is Pyridinium-3,5-bisthiocarboxylic acid mononucleotide nickel insertion protein from Thermotoga petrophila (strain ATCC BAA-488 / DSM 13995 / JCM 10881 / RKU-1).